The primary structure comprises 256 residues: 6-carboxyhexanoate--CoA ligase (256 aa).

Belongs to the BioW family. Homodimer. Mg(2+) serves as cofactor.

The catalysed reaction is heptanedioate + ATP + CoA = 6-carboxyhexanoyl-CoA + AMP + diphosphate. The protein operates within metabolic intermediate metabolism; pimeloyl-CoA biosynthesis; pimeloyl-CoA from pimelate: step 1/1. Catalyzes the transformation of pimelate into pimeloyl-CoA with concomitant hydrolysis of ATP to AMP. This Bacillus amyloliquefaciens (strain ATCC 23350 / DSM 7 / BCRC 11601 / CCUG 28519 / NBRC 15535 / NRRL B-14393 / F) protein is 6-carboxyhexanoate--CoA ligase.